We begin with the raw amino-acid sequence, 292 residues long: Ribosomal RNA small subunit methyltransferase A (292 aa).

6 residues coordinate S-adenosyl-L-methionine: Asn28, Leu30, Gly55, Glu76, Asp101, and Asn126.

This sequence belongs to the class I-like SAM-binding methyltransferase superfamily. rRNA adenine N(6)-methyltransferase family. RsmA subfamily.

The protein resides in the cytoplasm. The enzyme catalyses adenosine(1518)/adenosine(1519) in 16S rRNA + 4 S-adenosyl-L-methionine = N(6)-dimethyladenosine(1518)/N(6)-dimethyladenosine(1519) in 16S rRNA + 4 S-adenosyl-L-homocysteine + 4 H(+). In terms of biological role, specifically dimethylates two adjacent adenosines (A1518 and A1519) in the loop of a conserved hairpin near the 3'-end of 16S rRNA in the 30S particle. May play a critical role in biogenesis of 30S subunits. The protein is Ribosomal RNA small subunit methyltransferase A of Bacillus thuringiensis (strain Al Hakam).